Reading from the N-terminus, the 186-residue chain is Probable nicotinate-nucleotide adenylyltransferase (186 aa).

It belongs to the NadD family.

It carries out the reaction nicotinate beta-D-ribonucleotide + ATP + H(+) = deamido-NAD(+) + diphosphate. It participates in cofactor biosynthesis; NAD(+) biosynthesis; deamido-NAD(+) from nicotinate D-ribonucleotide: step 1/1. Its function is as follows. Catalyzes the reversible adenylation of nicotinate mononucleotide (NaMN) to nicotinic acid adenine dinucleotide (NaAD). The sequence is that of Probable nicotinate-nucleotide adenylyltransferase from Thermus thermophilus (strain ATCC 27634 / DSM 579 / HB8).